A 329-amino-acid chain; its full sequence is Ribosomal RNA small subunit methyltransferase H (329 aa).

S-adenosyl-L-methionine-binding positions include 34–36, Asp-52, Phe-79, Asp-100, and Gln-107; that span reads GGY. Positions 285 to 329 are disordered; that stretch reads GEDEVAHNPRARSAKLRAAERTSAPAHKDDQSSSWPRLSDVMRGG.

Belongs to the methyltransferase superfamily. RsmH family.

Its subcellular location is the cytoplasm. The catalysed reaction is cytidine(1402) in 16S rRNA + S-adenosyl-L-methionine = N(4)-methylcytidine(1402) in 16S rRNA + S-adenosyl-L-homocysteine + H(+). Specifically methylates the N4 position of cytidine in position 1402 (C1402) of 16S rRNA. In Bradyrhizobium diazoefficiens (strain JCM 10833 / BCRC 13528 / IAM 13628 / NBRC 14792 / USDA 110), this protein is Ribosomal RNA small subunit methyltransferase H.